Consider the following 463-residue polypeptide: D-inositol 3-phosphate glycosyltransferase (463 aa).

His-40 is a 1D-myo-inositol 3-phosphate binding site. UDP-N-acetyl-alpha-D-glucosamine is bound by residues 46–47 (QP) and Gly-54. 1D-myo-inositol 3-phosphate is bound by residues 51–56 (DAGGMN), Lys-109, Tyr-142, Thr-166, and Arg-186. Residues Arg-260, Lys-265, and Gln-318 each coordinate UDP-N-acetyl-alpha-D-glucosamine. Mg(2+) contacts are provided by Phe-327, His-328, and Val-330. UDP-N-acetyl-alpha-D-glucosamine is bound by residues Glu-340 and Glu-348. Residue Thr-354 coordinates Mg(2+). A disordered region spans residues 443–463 (VRDPVAARKPRRWTARRGVGA).

Belongs to the glycosyltransferase group 1 family. MshA subfamily. As to quaternary structure, homodimer.

It catalyses the reaction 1D-myo-inositol 3-phosphate + UDP-N-acetyl-alpha-D-glucosamine = 1D-myo-inositol 2-acetamido-2-deoxy-alpha-D-glucopyranoside 3-phosphate + UDP + H(+). Functionally, catalyzes the transfer of a N-acetyl-glucosamine moiety to 1D-myo-inositol 3-phosphate to produce 1D-myo-inositol 2-acetamido-2-deoxy-glucopyranoside 3-phosphate in the mycothiol biosynthesis pathway. The protein is D-inositol 3-phosphate glycosyltransferase of Mycobacterium ulcerans (strain Agy99).